The chain runs to 494 residues: MKKQAFSSEQYLNLQRDHILERINQFDGKLYLEFGGKMLEDFHAARVLPGYEPDNKIKLLQELKEQVEVVIAINASNIEHSKARGDLGISYDQEVLRLIDKFNELGIFVGSVVITQYAGQPAADAFRNQLEKNGIDSYLHYPIKGYPTDMDHIISPEGMGKNDYIKTSRNLIVVTAPGPGSGKLATCMSNMYHDQINGIKSGYAKFETFPVWNLPLHHPVNLAYEAATADLDDVNMIDPFHLQTYGETTVNYNRDIEIFPVLKRMLERILGKSPYASPTDMGVNMVGFAITDDEAAVEASKQEIIRRYYQTVLDFKAEKVGEAAVKKIELLMNDLGITPADRKVAVVARQKAEETGGPALAFELPNGEIITGKNSELFGPTAAALINAIKKSADIAKEVKLIEPEVVKPIQGLKIDHLGSRNPRLHSNEILIALAITATENPDAARAMEELGNLKGSEAHSTIILTDEDKNVLRKLGINVTFDPYYQYDRLYRK.

This sequence belongs to the UPF0371 family.

This Streptococcus pneumoniae serotype 4 (strain ATCC BAA-334 / TIGR4) protein is UPF0371 protein SP_0341.